The chain runs to 310 residues: Small ribosomal subunit biogenesis GTPase RsgA (310 aa).

One can recognise a CP-type G domain in the interval 77–236; that stretch reads KNELKRPNIA…IADTPGFSKL (160 aa). GTP-binding positions include 126-129 and 179-187; these read SKID and GQTGVGKST. 4 residues coordinate Zn(2+): Cys-260, Cys-266, His-268, and Cys-274.

The protein belongs to the TRAFAC class YlqF/YawG GTPase family. RsgA subfamily. Monomer. Associates with 30S ribosomal subunit, binds 16S rRNA. It depends on Zn(2+) as a cofactor.

Its subcellular location is the cytoplasm. In terms of biological role, one of several proteins that assist in the late maturation steps of the functional core of the 30S ribosomal subunit. Helps release RbfA from mature subunits. May play a role in the assembly of ribosomal proteins into the subunit. Circularly permuted GTPase that catalyzes slow GTP hydrolysis, GTPase activity is stimulated by the 30S ribosomal subunit. The polypeptide is Small ribosomal subunit biogenesis GTPase RsgA (Phytoplasma australiense).